Reading from the N-terminus, the 242-residue chain is Probable septum site-determining protein MinC (242 aa).

The protein belongs to the MinC family. Interacts with MinD and FtsZ.

In terms of biological role, cell division inhibitor that blocks the formation of polar Z ring septums. Rapidly oscillates between the poles of the cell to destabilize FtsZ filaments that have formed before they mature into polar Z rings. Prevents FtsZ polymerization. In Agrobacterium fabrum (strain C58 / ATCC 33970) (Agrobacterium tumefaciens (strain C58)), this protein is Probable septum site-determining protein MinC.